The sequence spans 386 residues: Succinate--CoA ligase [ADP-forming] subunit beta (386 aa).

In terms of domain architecture, ATP-grasp spans 9 to 244 (KAVLRSYGVS…LDEEDSKEIE (236 aa)). ATP-binding positions include Lys-46, 53–55 (GRG), Glu-99, Cys-102, and Glu-107. The Mg(2+) site is built by Asn-199 and Asp-213. Residues Asn-264 and 321 to 323 (GIM) contribute to the substrate site.

Belongs to the succinate/malate CoA ligase beta subunit family. Heterotetramer of two alpha and two beta subunits. Mg(2+) serves as cofactor.

It carries out the reaction succinate + ATP + CoA = succinyl-CoA + ADP + phosphate. The enzyme catalyses GTP + succinate + CoA = succinyl-CoA + GDP + phosphate. It participates in carbohydrate metabolism; tricarboxylic acid cycle; succinate from succinyl-CoA (ligase route): step 1/1. In terms of biological role, succinyl-CoA synthetase functions in the citric acid cycle (TCA), coupling the hydrolysis of succinyl-CoA to the synthesis of either ATP or GTP and thus represents the only step of substrate-level phosphorylation in the TCA. The beta subunit provides nucleotide specificity of the enzyme and binds the substrate succinate, while the binding sites for coenzyme A and phosphate are found in the alpha subunit. The polypeptide is Succinate--CoA ligase [ADP-forming] subunit beta (Bacillus cereus (strain G9842)).